A 435-amino-acid polypeptide reads, in one-letter code: NADH-quinone oxidoreductase subunit D 2 (435 aa).

This sequence belongs to the complex I 49 kDa subunit family. In terms of assembly, NDH-1 is composed of 14 different subunits. Subunits NuoB, C, D, E, F, and G constitute the peripheral sector of the complex.

Its subcellular location is the cell inner membrane. The enzyme catalyses a quinone + NADH + 5 H(+)(in) = a quinol + NAD(+) + 4 H(+)(out). Functionally, NDH-1 shuttles electrons from NADH, via FMN and iron-sulfur (Fe-S) centers, to quinones in the respiratory chain. The immediate electron acceptor for the enzyme in this species is believed to be ubiquinone. Couples the redox reaction to proton translocation (for every two electrons transferred, four hydrogen ions are translocated across the cytoplasmic membrane), and thus conserves the redox energy in a proton gradient. This Stenotrophomonas maltophilia (strain R551-3) protein is NADH-quinone oxidoreductase subunit D 2.